The following is a 177-amino-acid chain: N-terminal acetyltransferase A complex catalytic subunit ard1 (177 aa).

An N-acetyltransferase domain is found at Met1–Ser153.

Belongs to the acetyltransferase family. ARD1 subfamily. In terms of assembly, component of the N-terminal acetyltransferase A (NatA) complex, which is composed of at least ard1 and nat1.

Its subcellular location is the cytoplasm. It localises to the nucleus. It catalyses the reaction N-terminal glycyl-[protein] + acetyl-CoA = N-terminal N(alpha)-acetylglycyl-[protein] + CoA + H(+). The enzyme catalyses N-terminal L-alanyl-[protein] + acetyl-CoA = N-terminal N(alpha)-acetyl-L-alanyl-[protein] + CoA + H(+). The catalysed reaction is N-terminal L-seryl-[protein] + acetyl-CoA = N-terminal N(alpha)-acetyl-L-seryl-[protein] + CoA + H(+). It carries out the reaction N-terminal L-valyl-[protein] + acetyl-CoA = N-terminal N(alpha)-acetyl-L-valyl-[protein] + CoA + H(+). It catalyses the reaction N-terminal L-cysteinyl-[protein] + acetyl-CoA = N-terminal N(alpha)-acetyl-L-cysteinyl-[protein] + CoA + H(+). The enzyme catalyses N-terminal L-threonyl-[protein] + acetyl-CoA = N-terminal N(alpha)-acetyl-L-threonyl-[protein] + CoA + H(+). Its function is as follows. Catalytic component of the NatA N-terminal acetyltransferase, which catalyzes acetylation of proteins beginning with Met-Ser, Met-Gly and Met-Ala. N-acetylation plays a role in normal eukaryotic translation and processing, protect against proteolytic degradation and protein turnover. The polypeptide is N-terminal acetyltransferase A complex catalytic subunit ard1 (ard1) (Schizosaccharomyces pombe (strain 972 / ATCC 24843) (Fission yeast)).